Here is a 658-residue protein sequence, read N- to C-terminus: Protein teflon (658 aa).

Residues 33-56 (LYCHFCRDLFTQLPEFLRHLQSNH) form a C2H2-type 1 zinc finger. The interval 80–131 (DKAHEDAQSAGHNSSSGDSRSLMNSEDSRAIDGSEENSDNSPVKPEQIGKQN) is disordered. The span at 89-104 (AGHNSSSGDSRSLMNS) shows a compositional bias: polar residues. C2H2-type zinc fingers lie at residues 608–630 (YFCK…LISH) and 634–657 (FQCT…RNAH).

Belongs to the Teflon family.

It localises to the nucleus. The protein localises to the chromosome. In terms of biological role, specifically required in males for proper segregation of autosomal bivalents at meiosis I. Expression is required in the male germ line prior to spermatocyte stage S4. May have a role as a bridging molecule maintaining adhesion to hold autosome bivalents together via heterochromatic connections. This chain is Protein teflon, found in Drosophila simulans (Fruit fly).